A 179-amino-acid polypeptide reads, in one-letter code: Large ribosomal subunit protein uL5 (179 aa).

The protein belongs to the universal ribosomal protein uL5 family. As to quaternary structure, part of the 50S ribosomal subunit; part of the 5S rRNA/L5/L18/L25 subcomplex. Contacts the 5S rRNA and the P site tRNA. Forms a bridge to the 30S subunit in the 70S ribosome.

Its function is as follows. This is one of the proteins that bind and probably mediate the attachment of the 5S RNA into the large ribosomal subunit, where it forms part of the central protuberance. In the 70S ribosome it contacts protein S13 of the 30S subunit (bridge B1b), connecting the 2 subunits; this bridge is implicated in subunit movement. Contacts the P site tRNA; the 5S rRNA and some of its associated proteins might help stabilize positioning of ribosome-bound tRNAs. This chain is Large ribosomal subunit protein uL5, found in Halalkalibacterium halodurans (strain ATCC BAA-125 / DSM 18197 / FERM 7344 / JCM 9153 / C-125) (Bacillus halodurans).